Consider the following 369-residue polypeptide: Protein arginine N-methyltransferase 1-A (369 aa).

Residues Lys-48–Arg-369 form the SAM-dependent MTase PRMT-type domain. Residues His-61, Arg-70, Gly-94, Glu-116, and Glu-145 each contribute to the S-adenosyl-L-methionine site. Catalysis depends on residues Glu-160 and Glu-169.

The protein belongs to the class I-like SAM-binding methyltransferase superfamily. Protein arginine N-methyltransferase family. As to quaternary structure, homodimer. Homooctamer; individual homodimers associates to form a homooctamer and homooligomerization is required for proper localization to the cell membrane. Individual homodimers can associate to form a homohexamer. Component of a complex with lsm14a/rap55a. Interacts with cirbp.

The protein resides in the nucleus. The protein localises to the nucleoplasm. Its subcellular location is the cytoplasm. It is found in the cytosol. The enzyme catalyses L-arginyl-[protein] + 2 S-adenosyl-L-methionine = N(omega),N(omega)-dimethyl-L-arginyl-[protein] + 2 S-adenosyl-L-homocysteine + 2 H(+). The catalysed reaction is L-arginyl-[protein] + S-adenosyl-L-methionine = N(omega)-methyl-L-arginyl-[protein] + S-adenosyl-L-homocysteine + H(+). It carries out the reaction N(omega)-methyl-L-arginyl-[protein] + S-adenosyl-L-methionine = N(omega),N(omega)-dimethyl-L-arginyl-[protein] + S-adenosyl-L-homocysteine + H(+). Arginine methyltransferase that methylates (mono and asymmetric dimethylation) the guanidino nitrogens of arginyl residues present in target proteins. Constitutes the main enzyme that mediates monomethylation and asymmetric dimethylation of histone H4 'Arg-4' (H4R3me1 and H4R3me2a, respectively), a specific tag for epigenetic transcriptional activation. Methylates cirbp to regulate its subcellular location. Acts transiently during metamorphosis as a transcription coactivator, enhancing thyroid hormone (T3) receptor (TR)-mediated transcription by enhancing TR binding to the T3 response element (TRE), and histone modification through recruitment of other coactivators. The protein is Protein arginine N-methyltransferase 1-A (prmt1-a) of Xenopus laevis (African clawed frog).